We begin with the raw amino-acid sequence, 671 residues long: Archaeal Rqc2 homolog aRqcH (671 aa).

2 coiled-coil regions span residues 291–363 and 410–465; these read KVVV…ARIK and RKNA…MQMK.

Belongs to the NEMF family. Associates with stalled 50S ribosomal subunits.

In terms of biological role, probably part of the ribosome quality control system (RQC). May mediate the addition of alanine residues (Ala tailing) to incompletely synthesized nascent chains from stalled ribosomes, leading to their degradation. This Methanocaldococcus jannaschii (strain ATCC 43067 / DSM 2661 / JAL-1 / JCM 10045 / NBRC 100440) (Methanococcus jannaschii) protein is Archaeal Rqc2 homolog aRqcH.